A 49-amino-acid polypeptide reads, in one-letter code: Delta-actitoxin-Axm1b (49 aa).

The interval 1-7 (GVPCLCD) is well-structured region. 3 disulfide bridges follow: Cys-4-Cys-46, Cys-6-Cys-36, and Cys-29-Cys-47. An arg-14 loop (non-well-structured region) region spans residues 8 to 17 (SDGPRPRGNT). The interval 18–49 (LSGILWFYPSGCPSGWHNCKAHGPNIGWCCKK) is well-structured region.

This sequence belongs to the sea anemone sodium channel inhibitory toxin family. Type I subfamily.

It localises to the secreted. The protein resides in the nematocyst. In terms of biological role, binds specifically to voltage-gated sodium channels (Nav) (site 3), thereby delaying their inactivation. This toxin has the highest affinity of all anemone toxins for the mammalian sodium channel, whereas its paralog Anthopleurin-A retains the greatest capacity to discriminate between cardiac (Nav1.5/SCN5A) and neuronal sodium channels. When tested electrophysiologically, this toxin exhibits a high affinity for multiple sodium channels with a 50-fold preference for rat cardiac (Nav1.5/SCN5A) over neuronal channels (0.1 nM versus 5 nM). When tested by ion flux, the affinities are similar and appear to have higher affinity (9 nM versus 22 nM). The residue Lys-37 of this toxin has been shown to interact with channel Nav1.5 (residue Asp-1612 in rat and Asp-1610 in human), which is located in the DIV S3-S4 linker (corresponding to channel site 3). Selectively modifies sodium channel inactivation from the open state with little effect on channel activation or on inactivation from closed states. Does not display phospholipid-binding activities, suggesting that the domain IV S3-S4 linker is located at the extracellular surface and not buried in the phospholipid bilayer. In Anthopleura xanthogrammica (Giant green sea anemone), this protein is Delta-actitoxin-Axm1b.